Reading from the N-terminus, the 306-residue chain is Dermonecrotic toxin LarSicTox-alphaIB1ai (306 aa).

Residue V1 is a signal peptide. Residues R2–R27 constitute a propeptide that is removed on maturation. Residue H38 is part of the active site. E58 and D60 together coordinate Mg(2+). H74 serves as the catalytic Nucleophile. 2 cysteine pairs are disulfide-bonded: C78–C84 and C80–C223. D118 provides a ligand contact to Mg(2+). The N-linked (GlcNAc...) asparagine glycan is linked to N283.

The protein belongs to the arthropod phospholipase D family. Class II subfamily. The cofactor is Mg(2+). As to expression, expressed by the venom gland.

The protein localises to the secreted. It catalyses the reaction an N-(acyl)-sphingosylphosphocholine = an N-(acyl)-sphingosyl-1,3-cyclic phosphate + choline. It carries out the reaction an N-(acyl)-sphingosylphosphoethanolamine = an N-(acyl)-sphingosyl-1,3-cyclic phosphate + ethanolamine. The enzyme catalyses a 1-acyl-sn-glycero-3-phosphocholine = a 1-acyl-sn-glycero-2,3-cyclic phosphate + choline. The catalysed reaction is a 1-acyl-sn-glycero-3-phosphoethanolamine = a 1-acyl-sn-glycero-2,3-cyclic phosphate + ethanolamine. In terms of biological role, dermonecrotic toxins cleave the phosphodiester linkage between the phosphate and headgroup of certain phospholipids (sphingolipid and lysolipid substrates), forming an alcohol (often choline) and a cyclic phosphate. This toxin acts on sphingomyelin (SM). It may also act on ceramide phosphoethanolamine (CPE), lysophosphatidylcholine (LPC) and lysophosphatidylethanolamine (LPE), but not on lysophosphatidylserine (LPS), and lysophosphatidylglycerol (LPG). It acts by transphosphatidylation, releasing exclusively cyclic phosphate products as second products. Induces dermonecrosis, hemolysis, increased vascular permeability, edema, inflammatory response, and platelet aggregation. This is Dermonecrotic toxin LarSicTox-alphaIB1ai from Loxosceles arizonica (Arizona brown spider).